The following is a 937-amino-acid chain: Inactive tyrosine-protein kinase transmembrane receptor ROR1 (937 aa).

The N-terminal stretch at 1–29 (MHRPRRRGTRPPLLALLAALLLAARGAAA) is a signal peptide. At 30-406 (QETELSVSAE…KEKNKMEILY (377 aa)) the chain is on the extracellular side. The region spanning 42-147 (PTSSWNISSE…EVVSSTGVLF (106 aa)) is the Ig-like C2-type domain. 2 N-linked (GlcNAc...) asparagine glycosylation sites follow: Asn-47 and Asn-66. Intrachain disulfides connect Cys-79/Cys-131, Cys-170/Cys-235, Cys-178/Cys-228, Cys-219/Cys-260, Cys-248/Cys-296, Cys-252/Cys-282, Cys-313/Cys-391, Cys-334/Cys-374, and Cys-362/Cys-386. The FZ domain occupies 165-299 (EEDGFCQPYR…SPEAANCIRI (135 aa)). N-linked (GlcNAc...) asparagine glycosylation is present at Asn-184. The Kringle domain occupies 312-391 (KCYNSTGVDY…KSDLCDIPAC (80 aa)). N-linked (GlcNAc...) asparagine glycosylation occurs at Asn-315. Residues 407–427 (ILVPSVAIPLAIALLFFFICV) form a helical membrane-spanning segment. The Cytoplasmic portion of the chain corresponds to 428 to 937 (CRNNQKSSSA…HTESMISAEL (510 aa)). Residues 473–746 (VRFMEELGEC…PRFKDIHVRL (274 aa)) enclose the Protein kinase domain. ATP contacts are provided by residues 479–487 (LGECAFGKI) and Lys-506. Position 645 is a phosphotyrosine; by autocatalysis (Tyr-645). Positions 753 to 762 (SSHTSSTTPS) are enriched in low complexity. 2 disordered regions span residues 753–779 (SSHT…SPVS) and 833–890 (AAHY…HMSI). Residues 763 to 779 (GGNATTQTTSLSASPVS) are compositionally biased toward polar residues. Residues 854-864 (RSPSSASGSTS) show a composition bias toward low complexity. Residues 865 to 880 (TGHVTSLPSSGSNQEA) are compositionally biased toward polar residues.

Belongs to the protein kinase superfamily. Tyr protein kinase family. ROR subfamily. Interacts with ERBB2 and IGFBP5. Expressed strongly in human heart, lung and kidney, but weakly in the CNS. Isoform Short is strongly expressed in fetal and adult CNS and in a variety of human cancers, including those originating from CNS or PNS neuroectoderm.

The protein resides in the membrane. The protein localises to the cell projection. Its subcellular location is the axon. Its function is as follows. Has very low kinase activity in vitro and is unlikely to function as a tyrosine kinase in vivo. Receptor for ligand WNT5A which activate downstream NFkB signaling pathway and may result in the inhibition of WNT3A-mediated signaling. In inner ear, crucial for spiral ganglion neurons to innervate auditory hair cells. Via IGFBP5 ligand, forms a complex with ERBB2 to enhance CREB oncogenic signaling. The polypeptide is Inactive tyrosine-protein kinase transmembrane receptor ROR1 (ROR1) (Homo sapiens (Human)).